The following is a 211-amino-acid chain: Thymidylate kinase (211 aa).

Residue 7-14 (GIDGCGKT) participates in ATP binding.

The protein belongs to the thymidylate kinase family.

It carries out the reaction dTMP + ATP = dTDP + ADP. Its function is as follows. Phosphorylation of dTMP to form dTDP in both de novo and salvage pathways of dTTP synthesis. The protein is Thymidylate kinase of Anaplasma marginale (strain St. Maries).